The following is a 229-amino-acid chain: MIEVCPENVRIEESWKKVLYEQFSQDYFVRIKETLLAAKAQGIVTYPPNKLIFNAFDQTPFDAVKAVIIGQDPYHGRGQAMGLSFSVPKGVRPPPSLLNIYKELKRSYPDFQVPDHGDLSAWAKQGVLLLNASLTVEAGKAGSHRAIGWQEFTHAAIEALSNEREHIVFMLWGNFAKAKAQFIDAEKHCILTAVHPSPLAGGAFIGCDHFRRANDYLIAHGKTPINWQV.

Asp-72 functions as the Proton acceptor in the catalytic mechanism.

Belongs to the uracil-DNA glycosylase (UDG) superfamily. UNG family.

It is found in the cytoplasm. It catalyses the reaction Hydrolyzes single-stranded DNA or mismatched double-stranded DNA and polynucleotides, releasing free uracil.. Functionally, excises uracil residues from the DNA which can arise as a result of misincorporation of dUMP residues by DNA polymerase or due to deamination of cytosine. In Dichelobacter nodosus (strain VCS1703A), this protein is Uracil-DNA glycosylase.